The sequence spans 317 residues: Putative HTH-type transcriptional regulatory protein Mlab_0160 (317 aa).

One can recognise an HTH cro/C1-type domain in the interval 132 to 189 (LRTLREEQAMSLGDLAHALGVSRRTISKYEGGMGTTLEMAMRLEEFFNDDIVMPIDLL). The segment at residues 143–162 (LGDLAHALGVSRRTISKYEG) is a DNA-binding region (H-T-H motif). The segment at 199 to 219 (VPASLASGHNPESDAQPKRPE) is disordered. The span at 209 to 219 (PESDAQPKRPE) shows a compositional bias: basic and acidic residues.

The polypeptide is Putative HTH-type transcriptional regulatory protein Mlab_0160 (Methanocorpusculum labreanum (strain ATCC 43576 / DSM 4855 / Z)).